A 364-amino-acid chain; its full sequence is Probable dual-specificity RNA methyltransferase RlmN (364 aa).

Glu-107 acts as the Proton acceptor in catalysis. Residues 113–346 form the Radical SAM core domain; sequence HDYGNSVCVT…ATIRREQGSD (234 aa). A disulfide bridge links Cys-120 with Cys-351. The [4Fe-4S] cluster site is built by Cys-127, Cys-131, and Cys-134. Residues 177 to 178, Ser-209, 232 to 234, and Asn-308 contribute to the S-adenosyl-L-methionine site; these read GE and SLH. Cys-351 (S-methylcysteine intermediate) is an active-site residue.

It belongs to the radical SAM superfamily. RlmN family. The cofactor is [4Fe-4S] cluster.

Its subcellular location is the cytoplasm. The enzyme catalyses adenosine(2503) in 23S rRNA + 2 reduced [2Fe-2S]-[ferredoxin] + 2 S-adenosyl-L-methionine = 2-methyladenosine(2503) in 23S rRNA + 5'-deoxyadenosine + L-methionine + 2 oxidized [2Fe-2S]-[ferredoxin] + S-adenosyl-L-homocysteine. It carries out the reaction adenosine(37) in tRNA + 2 reduced [2Fe-2S]-[ferredoxin] + 2 S-adenosyl-L-methionine = 2-methyladenosine(37) in tRNA + 5'-deoxyadenosine + L-methionine + 2 oxidized [2Fe-2S]-[ferredoxin] + S-adenosyl-L-homocysteine. In terms of biological role, specifically methylates position 2 of adenine 2503 in 23S rRNA and position 2 of adenine 37 in tRNAs. Confers resistance to some classes of antibiotics. This Staphylococcus haemolyticus (strain JCSC1435) protein is Probable dual-specificity RNA methyltransferase RlmN.